A 196-amino-acid chain; its full sequence is Orotate phosphoribosyltransferase (196 aa).

117–125 (EDIVTTGLS) serves as a coordination point for 5-phospho-alpha-D-ribose 1-diphosphate. Residues Thr-121 and Arg-149 each contribute to the orotate site.

Belongs to the purine/pyrimidine phosphoribosyltransferase family. PyrE subfamily. Homodimer. Mg(2+) serves as cofactor.

It carries out the reaction orotidine 5'-phosphate + diphosphate = orotate + 5-phospho-alpha-D-ribose 1-diphosphate. It functions in the pathway pyrimidine metabolism; UMP biosynthesis via de novo pathway; UMP from orotate: step 1/2. Functionally, catalyzes the transfer of a ribosyl phosphate group from 5-phosphoribose 1-diphosphate to orotate, leading to the formation of orotidine monophosphate (OMP). The protein is Orotate phosphoribosyltransferase of Methylobacterium sp. (strain 4-46).